A 118-amino-acid chain; its full sequence is Basic leucine zipper transcriptional factor ATF-like 3 (118 aa).

A disordered region spans residues 1 to 69; it reads MSQGPPAVSV…HESLEQENSV (69 aa). Phosphoserine occurs at positions 2 and 24. A bZIP domain is found at 28–91; sequence DDRKVRRREK…RHLSEVLKEH (64 aa). Residues 30 to 55 are basic motif; it reads RKVRRREKNRVAAQRSRKKQTQKADK. Basic and acidic residues predominate over residues 51–69; that stretch reads QKADKLHEEHESLEQENSV. A leucine-zipper region spans residues 56–84; sequence LHEEHESLEQENSVLRREISKLKEELRHL.

The protein belongs to the bZIP family. In terms of assembly, heterodimer; heterodimerizes with JUN family proteins. Interacts with JUN. In terms of tissue distribution, highly expressed in CD8-alpha(+) classical dendritic cells (cDCs), with low to absent expression in other immune cells and non-immune tissues.

It is found in the nucleus. Functionally, AP-1 family transcription factor that controls the differentiation of CD8(+) thymic conventional dendritic cells in the immune system. Acts via the formation of a heterodimer with JUN family proteins that recognizes and binds DNA sequence 5'-TGA[CG]TCA-3' and regulates expression of target genes. Required for development of CD8-alpha(+) classical dendritic cells (cDCs) and related CD103(+) dendritic cells that cross-present antigens to CD8 T-cells and produce interleukin-12 (IL12) in response to pathogens. This is Basic leucine zipper transcriptional factor ATF-like 3 (Batf3) from Mus musculus (Mouse).